A 159-amino-acid polypeptide reads, in one-letter code: Transcriptional repressor NrdR (159 aa).

The segment at 3–34 (CPFCRHEDTQVVDSRVSEDGAAIRRRRRCSAC) is a zinc-finger region. The ATP-cone domain maps to 49 to 139 (PAVVKKDGSR…VYRRFEDVSE (91 aa)).

Belongs to the NrdR family. Requires Zn(2+) as cofactor.

Negatively regulates transcription of bacterial ribonucleotide reductase nrd genes and operons by binding to NrdR-boxes. This is Transcriptional repressor NrdR from Burkholderia ambifaria (strain MC40-6).